Here is a 458-residue protein sequence, read N- to C-terminus: Chondroitin hydrolase (458 aa).

The N-terminal stretch at 1 to 22 (MVIVWYHQLLLVLLIFIGAAKG) is a signal peptide. The region spanning 358–401 (NLDKCRMERCEGRGECYLPRPKTNPAIYNFACRCERPYFGKSCE) is the EGF-like domain. Disulfide bonds link Cys362–Cys373, Cys367–Cys389, and Cys391–Cys400.

Belongs to the glycosyl hydrolase 56 family.

Functionally, endo-beta-galactosaminidase that specifically hydrolyzes chondroitin, releasing GlcUA-beta-(1-&gt;3)-GalNAc-beta-(1-&gt;4)-GlcUA-beta-(1-&gt;3)-GalNAc as the main product. Also hydrolyzes to a lesser extent chondroitin sulfates (CS-A, CS-C) and hyaluronic acid. May regulate the function of chondroitin in cell division. The protein is Chondroitin hydrolase of Caenorhabditis elegans.